The chain runs to 315 residues: GPN-loop GTPase 2 homolog (315 aa).

12-17 lines the GTP pocket; it reads GSGKTV. The short motif at 69-71 is the Gly-Pro-Asn (GPN)-loop; involved in dimer interface element; it reads GPN. A GTP-binding site is contributed by 171–174; it reads SKMD.

Belongs to the GPN-loop GTPase family. As to quaternary structure, heterodimers with gpn1 or gpn3. Binds to RNA polymerase II (RNAPII).

Functionally, small GTPase required for proper localization of RNA polymerase II and III (RNAPII and RNAPIII). May act at an RNAP assembly step prior to nuclear import. This chain is GPN-loop GTPase 2 homolog (gpn2), found in Dictyostelium discoideum (Social amoeba).